The primary structure comprises 229 residues: Non-structural protein P8 (229 aa).

The next 2 helical transmembrane spans lie at 119–139 and 162–182; these read IIHM…VCTL and SLNP…MVCA.

Belongs to the orbivirus NS3 family. Forms homooligomers via coiled-coil motif. Interacts with host OPTN; this interaction inhibits innate immune response.

It localises to the host cell membrane. The protein localises to the host Golgi apparatus. In terms of biological role, plays a role in the inhibition of host innate immune response. Interacts with host OPTN and thus inhibits the recruitment of TBK1 to the host Golgi apparatus. In turn, downstream partner IRF3 cannot be activated and IFN-beta production is impaired. Functionally, facilitates viral particle release either by increasing plasma membrane permeability through a viroporin-like activity or by viral budding. This is Non-structural protein P8 (Segment-10) from Antilocapra americana (Pronghorn).